Consider the following 132-residue polypeptide: Large ribosomal subunit protein bL17 (132 aa).

Belongs to the bacterial ribosomal protein bL17 family. In terms of assembly, part of the 50S ribosomal subunit. Contacts protein L32.

The protein is Large ribosomal subunit protein bL17 of Marinobacter nauticus (strain ATCC 700491 / DSM 11845 / VT8) (Marinobacter aquaeolei).